Consider the following 92-residue polypeptide: Alpha-conotoxin VxXXA (92 aa).

The signal sequence occupies residues 1 to 24 (MPKLEMMLLVLLIFPLSYFIAAGG). Residues 25-45 (QVVQVDRRGDGLAGYLQRGDR) constitute a propeptide that is removed on maturation. Pro55, Pro70, and Pro74 each carry 4-hydroxyproline; partial. 4 cysteine pairs are disulfide-bonded: Cys63-Cys72, Cys68-Cys80, Cys73-Cys90, and Cys78-Cys92.

It belongs to the conotoxin D superfamily. Homodimer or pseudo-homodimer. Three dimers exist: homodimer of VxXXA, pseudo-homodimer of both VxXXA and [hydroxyPro-74]VxXXA and homodimer of [hydroxyPro-74]VxXXA. These three components exist in a 1:2:1 ratio. VxXXA stands for the form with the Pro-55 hydroxylated. A second major form has both Pro-55 and Pro-74 hydroxylated. The two major forms VxXXA and [hydroxyPro-74]VxXXA exist in a 1:1 ratio. In terms of processing, minor forms are [hydroxyPro-70,hydroxyPro-74]VxXXA and [Pro-55]VxXXA. As to expression, expressed by the venom duct.

Its subcellular location is the secreted. In terms of biological role, alpha-conotoxins act on postsynaptic membranes, they bind to the nicotinic acetylcholine receptors (nAChR) and thus inhibit them. Through its two C-terminal domains, this homodimeric protein would bind to two nAChR allosteric sites, located outside the nAChR C-loop of the principal binding face and at the adjacent binding interface in a clockwise direction. This toxin specifically blocks mammalian neuronal nAChR of the alpha-7/CHRNA7, alpha-3-beta-2/CHRNA3-CHRNB2 (IC(50)=370 nM) and alpha-4-beta-2/CHRNA4-CHRNB2 subtypes. VxXXB inhibits alpha-7/CHRNA7 and alpha-3-beta-2/CHRNA3-CHRNB2 nAChR subtypes with the highest efficiency, followed by VxXXA and VxXXC. VxXXB and VxXXC inhibit the alpha-4-beta-2/CHRNA4-CHRNB2 nAChR subtype more efficiently than VxXXA. This Conus vexillum (Flag cone) protein is Alpha-conotoxin VxXXA.